Consider the following 95-residue polypeptide: Small ribosomal subunit protein uS15 (95 aa).

It belongs to the universal ribosomal protein uS15 family. Part of the 30S ribosomal subunit. Forms a bridge to the 50S subunit in the 70S ribosome, contacting the 23S rRNA.

Functionally, one of the primary rRNA binding proteins, it binds directly to 16S rRNA where it helps nucleate assembly of the platform of the 30S subunit by binding and bridging several RNA helices of the 16S rRNA. Forms an intersubunit bridge (bridge B4) with the 23S rRNA of the 50S subunit in the ribosome. The chain is Small ribosomal subunit protein uS15 from Streptomyces avermitilis (strain ATCC 31267 / DSM 46492 / JCM 5070 / NBRC 14893 / NCIMB 12804 / NRRL 8165 / MA-4680).